We begin with the raw amino-acid sequence, 121 residues long: Ribonuclease P protein component (121 aa).

The protein belongs to the RnpA family. As to quaternary structure, consists of a catalytic RNA component (M1 or rnpB) and a protein subunit.

The enzyme catalyses Endonucleolytic cleavage of RNA, removing 5'-extranucleotides from tRNA precursor.. Its function is as follows. RNaseP catalyzes the removal of the 5'-leader sequence from pre-tRNA to produce the mature 5'-terminus. It can also cleave other RNA substrates such as 4.5S RNA. The protein component plays an auxiliary but essential role in vivo by binding to the 5'-leader sequence and broadening the substrate specificity of the ribozyme. This Rickettsia prowazekii (strain Madrid E) protein is Ribonuclease P protein component.